Here is a 533-residue protein sequence, read N- to C-terminus: Retinoid isomerohydrolase (533 aa).

Position 2 is an N-acetylserine (Ser2). Phosphothreonine occurs at positions 101 and 105. Cys112 is lipidated: S-palmitoyl cysteine; in membrane form. The residue at position 113 (Lys113) is an N6-acetyllysine. Ser117 bears the Phosphoserine mark. His180 contributes to the Fe cation binding site. A lipid anchor (S-palmitoyl cysteine; in membrane form) is attached at Cys231. Fe cation is bound by residues His241 and His313. Residues Cys329 and Cys330 are each lipidated (S-palmitoyl cysteine; in membrane form). His527 provides a ligand contact to Fe cation.

This sequence belongs to the carotenoid oxygenase family. Interacts with MYO7A; this mediates light-dependent intracellular transport of RPE65. Fe(2+) serves as cofactor. Palmitoylation by LRAT regulates ligand binding specificity; the palmitoylated form (membrane form) specifically binds all-trans-retinyl-palmitate, while the soluble unpalmitoylated form binds all-trans-retinol (vitamin A). As to expression, retinal pigment epithelium specific.

The protein resides in the cytoplasm. The protein localises to the cell membrane. It is found in the microsome membrane. The catalysed reaction is an all-trans-retinyl ester + H2O = 11-cis-retinol + a fatty acid + H(+). The enzyme catalyses lutein = (3R,3'S)-zeaxanthin. It catalyses the reaction all-trans-retinyl hexadecanoate + H2O = 11-cis-retinol + hexadecanoate + H(+). In terms of biological role, critical isomerohydrolase in the retinoid cycle involved in regeneration of 11-cis-retinal, the chromophore of rod and cone opsins. Catalyzes the cleavage and isomerization of all-trans-retinyl fatty acid esters to 11-cis-retinol which is further oxidized by 11-cis retinol dehydrogenase to 11-cis-retinal for use as visual chromophore. Essential for the production of 11-cis retinal for both rod and cone photoreceptors. Also capable of catalyzing the isomerization of lutein to meso-zeaxanthin an eye-specific carotenoid. The soluble form binds vitamin A (all-trans-retinol), making it available for LRAT processing to all-trans-retinyl ester. The membrane form, palmitoylated by LRAT, binds all-trans-retinyl esters, making them available for IMH (isomerohydrolase) processing to all-cis-retinol. The soluble form is regenerated by transferring its palmitoyl groups onto 11-cis-retinol, a reaction catalyzed by LRAT. The sequence is that of Retinoid isomerohydrolase (Rpe65) from Mus musculus (Mouse).